The sequence spans 158 residues: Pathogenesis-related protein 2 (158 aa).

The protein belongs to the BetVI family.

This is Pathogenesis-related protein 2 (PR2) from Petroselinum crispum (Parsley).